A 273-amino-acid polypeptide reads, in one-letter code: MKAFNTSWADEVDADYVDGLPPSNEYIEGDYKYVTEYKFNDDGKKVKVVRTFKIEKQIVPKAVARRRSWVKFGDSRLDKPGPNSQTTMASEEIFMQFIGSKEFDQTHETQLDPGKNIAKCRICNGEHWSVNCPYKGTSMDSKTMMETKANAAAAAAISDPSKTGKYVPPFMKDGGGGPGGKNWGRGRERDDSSAVRISNLSESMTEADLEELVKKIGPHTKMYLAREKNTGLCKGFAYVHFKFRQDAAAAIEVLNGHGYDHLILCVEWSKPQP.

A disordered region spans residues Lys165–Ser193. Residues Asp173 to Trp183 show a composition bias toward gly residues. The region spanning Ser193–Pro271 is the RRM domain.

The protein belongs to the eIF-3 subunit G family. As to quaternary structure, component of the eukaryotic translation initiation factor 3 (eIF-3) complex. The eIF-3 complex interacts with pix.

It localises to the cytoplasm. Its function is as follows. RNA-binding component of the eukaryotic translation initiation factor 3 (eIF-3) complex, which is involved in protein synthesis of a specialized repertoire of mRNAs and, together with other initiation factors, stimulates binding of mRNA and methionyl-tRNAi to the 40S ribosome. The eIF-3 complex specifically targets and initiates translation of a subset of mRNAs involved in cell proliferation. This subunit can bind 18S rRNA. This chain is Eukaryotic translation initiation factor 3 subunit G-2, found in Drosophila yakuba (Fruit fly).